Reading from the N-terminus, the 547-residue chain is Cytochrome P450 monooxygenase fsoD (547 aa).

The chain crosses the membrane as a helical span at residues 3–23 (DITLAAVSIGLFFYVGARAVL). Residue Cys-490 participates in heme binding.

Belongs to the cytochrome P450 family. The cofactor is heme.

The protein resides in the membrane. It carries out the reaction isomotiol + reduced [NADPH--hemoprotein reductase] + O2 = 2alpha-hydroxyisomotiol + oxidized [NADPH--hemoprotein reductase] + H2O + H(+). Its pathway is secondary metabolite biosynthesis; terpenoid biosynthesis. In terms of biological role, cytochrome P450 monooxygenase; part of the gene cluster that mediates the biosynthesis of the enfumafungin-type antibiotic, fuscoatroside. Within the pathway, fsoD catalyzes the hydroxylation at position C2 of isomotiol to produce 2-alpha-hydroxy-isomotiol. FsoD may also hydroxylate the intermediates 3-O-(beta-D-glucopyranosyl)-isomotiol and 2-deacetoxy-fuscoatroside at the same position C2. The fuscoatroside biosynthesis is initiated by the cyclization of 2,3(S)-oxidosqualene through FsoA's terpene cyclase (TC) domain, leading to the formation of the fernane skeleton isomotiol, harboring a fernane triterpene skeleton with a C8-C9 double bond. Subsequently, C2-alpha-hydroxylation mediated by fsoD results in the production of 2-alpha-hydroxy-isomotiol, which is further acetylated by fsoF. The glycosyltransferase (GT) domain of FsoA may convert isomotiol, 2-alpha-hydroxy-isomotiol, and the acetylated derivative of 2-alpha-hydroxy-isomotiol into their corresponding glycosides 3-O-(beta-D-glucopyranosyl)-isomotiol, 3-O-(beta-D-glucopyranosyl)-2-alpha-hydroxy-isomotiol, and 3-O-(beta-D-glucopyranosyl)-2-alpha-acetoxy-isomotiol, which then undergo oxidative cleavage under the action of fsoE to form s 2-deacetoxy-fuscoatroside, 2-deacetyl-fuscoatroside, and fuscoatroside, respectively. Although hydroxylation followed by acetylation of 3-O-(beta-D-glucopyranosyl)-isomotiol and 2-deacetoxy-fuscoatroside by fsoD and fsoF could not be ruled out, this process is likely to occur with difficulty due to bulky steric hindrance caused by the presence of a glycan at C3 in these compounds. Interestingly, fsoE can also utilize the aglycones isomotiol and 2-alpha-hydroxy-isomotiol as substrates to generate 19-beta-hydroxy-isomotiol and 2-alpha,19-beta-dihydroxy-isomotiol, respectively. These reactions occur with lower efficiency. Finally, fsoE can further convert 2-alpha,19-beta-dihydroxy-isomotiol into 2-alpha-hydroxy-ismotiol-19-one and 2-alpha-hydroxy-ismotiol-19-one into 2-deacetyl-3-deglucopyranosyl-fuscoatroside. The sequence is that of Cytochrome P450 monooxygenase fsoD from Humicola fuscoatra.